A 205-amino-acid chain; its full sequence is Holliday junction resolvase RecU (205 aa).

The segment at 1-26 (MIRYPNGKSYQPIQPIGTKKRISGES) is disordered. Mg(2+) is bound by residues T86, D88, E101, and Q120.

The protein belongs to the RecU family. Mg(2+) is required as a cofactor.

It localises to the cytoplasm. It carries out the reaction Endonucleolytic cleavage at a junction such as a reciprocal single-stranded crossover between two homologous DNA duplexes (Holliday junction).. Functionally, endonuclease that resolves Holliday junction intermediates in genetic recombination. Cleaves mobile four-strand junctions by introducing symmetrical nicks in paired strands. Promotes annealing of linear ssDNA with homologous dsDNA. Required for DNA repair, homologous recombination and chromosome segregation. The protein is Holliday junction resolvase RecU of Bacillus pumilus (strain SAFR-032).